The following is a 98-amino-acid chain: (4S)-4-hydroxy-5-phosphonooxypentane-2,3-dione isomerase (98 aa).

One can recognise an ABM domain in the interval 2–91 (NVTLVEINIK…MSQPRQKRSF (90 aa)).

Belongs to the LsrG family. Homodimer.

It localises to the cytoplasm. It catalyses the reaction (2S)-2-hydroxy-3,4-dioxopentyl phosphate = 3-hydroxy-2,4-dioxopentyl phosphate. Involved in the degradation of phospho-AI-2, thereby terminating induction of the lsr operon and closing the AI-2 signaling cycle. Catalyzes the conversion of (4S)-4-hydroxy-5-phosphonooxypentane-2,3-dione (P-DPD) to 3-hydroxy-5-phosphonooxypentane-2,4-dione (P-HPD). This is (4S)-4-hydroxy-5-phosphonooxypentane-2,3-dione isomerase from Klebsiella pneumoniae subsp. pneumoniae (strain ATCC 700721 / MGH 78578).